The sequence spans 782 residues: E3 UFM1-protein ligase 1 homolog (782 aa).

The tract at residues 404 to 478 (NVSTQELEDE…SRGGGGASKK (75 aa)) is disordered.

The protein belongs to the UFL1 family.

In terms of biological role, E3 UFM1-protein ligase that mediates ufmylation of target proteins. This chain is E3 UFM1-protein ligase 1 homolog, found in Drosophila melanogaster (Fruit fly).